Reading from the N-terminus, the 348-residue chain is Fe-S cluster assembly protein DRE2 (348 aa).

An N-terminal SAM-like domain region spans residues 1–158 (MSQYKTGLLL…LPTFKKASSS (158 aa)). The segment at 137–170 (KTNNTKLQSGSKLPTFKKASSSTSNLPSFKKADH) is disordered. Residues 144–163 (QSGSKLPTFKKASSSTSNLP) are compositionally biased toward polar residues. The linker stretch occupies residues 159 to 242 (TSNLPSFKKA…EEELIDEDGS (84 aa)). Phosphoserine is present on S206. [2Fe-2S] cluster contacts are provided by C252, C263, C266, and C268. The segment at 252 to 268 (CGKSKTKKKKACKDCTC) is fe-S binding site A. [4Fe-4S] cluster-binding residues include C311, C314, C322, and C325. 2 consecutive short sequence motifs (cx2C motif) follow at residues 311 to 314 (CGSC) and 322 to 325 (CSGC). Positions 311-325 (CGSCSLGDAFRCSGC) are fe-S binding site B.

This sequence belongs to the anamorsin family. As to quaternary structure, monomer. Interacts with TAH18. Interacts with MIA40. [2Fe-2S] cluster serves as cofactor. It depends on [4Fe-4S] cluster as a cofactor. Ubiquitinated.

The protein localises to the cytoplasm. It is found in the mitochondrion intermembrane space. Functionally, component of the cytosolic iron-sulfur (Fe-S) protein assembly (CIA) machinery required for the maturation of extramitochondrial Fe-S proteins. Part of an electron transfer chain functioning in an early step of cytosolic Fe-S biogenesis, facilitating the de novo assembly of a [4Fe-4S] cluster on the scaffold complex CFD1-NBP35. Electrons are transferred to DRE2 from NADPH via the FAD- and FMN-containing protein TAH18. TAH18-DRE2 are also required for the assembly of the diferric tyrosyl radical cofactor of ribonucleotide reductase (RNR), probably by providing electrons for reduction during radical cofactor maturation in the catalytic small subunit RNR2. Has anti-apoptotic effects in the cell. Involved in negative control of H(2)O(2)-induced cell death. The polypeptide is Fe-S cluster assembly protein DRE2 (Saccharomyces cerevisiae (strain ATCC 204508 / S288c) (Baker's yeast)).